A 210-amino-acid chain; its full sequence is N-(5'-phosphoribosyl)anthranilate isomerase (210 aa).

It belongs to the TrpF family.

The enzyme catalyses N-(5-phospho-beta-D-ribosyl)anthranilate = 1-(2-carboxyphenylamino)-1-deoxy-D-ribulose 5-phosphate. The protein operates within amino-acid biosynthesis; L-tryptophan biosynthesis; L-tryptophan from chorismate: step 3/5. This is N-(5'-phosphoribosyl)anthranilate isomerase (TRP1) from Eremothecium gossypii (strain ATCC 10895 / CBS 109.51 / FGSC 9923 / NRRL Y-1056) (Yeast).